A 335-amino-acid polypeptide reads, in one-letter code: Pyridoxal 5'-phosphate synthase subunit PdxS (335 aa).

D-ribose 5-phosphate is bound at residue Asp-59. Residue Lys-116 is the Schiff-base intermediate with D-ribose 5-phosphate of the active site. Gly-188 serves as a coordination point for D-ribose 5-phosphate. Lys-200 serves as a coordination point for D-glyceraldehyde 3-phosphate. D-ribose 5-phosphate contacts are provided by residues Gly-253 and 274 to 275 (GS).

The protein belongs to the PdxS/SNZ family. In the presence of PdxT, forms a dodecamer of heterodimers.

The catalysed reaction is aldehydo-D-ribose 5-phosphate + D-glyceraldehyde 3-phosphate + L-glutamine = pyridoxal 5'-phosphate + L-glutamate + phosphate + 3 H2O + H(+). Its pathway is cofactor biosynthesis; pyridoxal 5'-phosphate biosynthesis. Its function is as follows. Catalyzes the formation of pyridoxal 5'-phosphate from ribose 5-phosphate (RBP), glyceraldehyde 3-phosphate (G3P) and ammonia. The ammonia is provided by the PdxT subunit. Can also use ribulose 5-phosphate and dihydroxyacetone phosphate as substrates, resulting from enzyme-catalyzed isomerization of RBP and G3P, respectively. The polypeptide is Pyridoxal 5'-phosphate synthase subunit PdxS (Desulfurococcus amylolyticus (strain DSM 18924 / JCM 16383 / VKM B-2413 / 1221n) (Desulfurococcus kamchatkensis)).